A 228-amino-acid polypeptide reads, in one-letter code: Isoprenyl transferase (228 aa).

Residue Asp15 is part of the active site. Residue Asp15 participates in Mg(2+) binding. Residues 16-19, Trp20, Arg28, His32, and 60-62 each bind substrate; these read GNGR and STE. Asn63 acts as the Proton acceptor in catalysis. Residues Trp64, Arg66, Arg176, and 182–184 contribute to the substrate site; that span reads RLS. Glu195 contributes to the Mg(2+) binding site.

Belongs to the UPP synthase family. As to quaternary structure, homodimer. Requires Mg(2+) as cofactor.

In terms of biological role, catalyzes the condensation of isopentenyl diphosphate (IPP) with allylic pyrophosphates generating different type of terpenoids. In Wolinella succinogenes (strain ATCC 29543 / DSM 1740 / CCUG 13145 / JCM 31913 / LMG 7466 / NCTC 11488 / FDC 602W) (Vibrio succinogenes), this protein is Isoprenyl transferase.